A 1892-amino-acid chain; its full sequence is Plexin A3 (1892 aa).

The signal sequence occupies residues 1 to 20 (MRSLWLLVFSFSVLTGTNMA). Residues 21–509 (FPMILSERPE…SDKQVSRLPV (489 aa)) enclose the Sema domain. The Extracellular segment spans residues 21 to 1240 (FPMILSERPE…IYSDSTLTLP (1220 aa)). Asparagine 68 carries an N-linked (GlcNAc...) asparagine glycan. 9 cysteine pairs are disulfide-bonded: cysteine 86-cysteine 95, cysteine 121-cysteine 129, cysteine 283-cysteine 404, cysteine 299-cysteine 355, cysteine 373-cysteine 392, cysteine 512-cysteine 529, cysteine 518-cysteine 560, cysteine 521-cysteine 538, and cysteine 532-cysteine 544. A glycan (N-linked (GlcNAc...) asparagine) is linked at asparagine 569. An intrachain disulfide couples cysteine 595 to cysteine 615. IPT/TIG domains follow at residues 861–955 (PRIT…YSFV), 957–1041 (PSFS…YIYT), 1044–1143 (PNIS…FTYY), and 1146–1232 (PTFE…LHIY). Asparagine 1183 is a glycosylation site (N-linked (GlcNAc...) asparagine). Residues 1241–1261 (AIIGIGAGGGVLLIAIIAVLI) form a helical membrane-spanning segment. Residues 1262–1315 (AYKRKTRDADRTLKRLQLQMDNLESRVALECKEAFAELQTDIQELTNDMDGVKI) are a coiled coil. The Cytoplasmic segment spans residues 1262–1892 (AYKRKTRDAD…QAINLMSGSS (631 aa)).

The protein belongs to the plexin family. As to expression, detected in primary motor neurons in the embryonic nervous system.

It localises to the cell membrane. Its function is as follows. Coreceptor for class 3 semaphorins. Necessary for signaling by class 3 semaphorins and subsequent remodeling of the cytoskeleton. Plays a role in axon guidance in the developing nervous system. Class 3 semaphorins bind to a complex composed of a neuropilin and a plexin. The plexin modulates the affinity of the complex for specific semaphorins, and its cytoplasmic domain is required for the activation of down-stream signaling events in the cytoplasm. In Danio rerio (Zebrafish), this protein is Plexin A3 (plxna3).